The chain runs to 140 residues: Large ribosomal subunit protein uL14 (140 aa).

The residue at position 17 (S17) is a Phosphoserine. Y38 carries the post-translational modification Phosphotyrosine.

Belongs to the universal ribosomal protein uL14 family. Component of the large ribosomal subunit.

It localises to the cytoplasm. Component of the large ribosomal subunit. The ribosome is a large ribonucleoprotein complex responsible for the synthesis of proteins in the cell. This chain is Large ribosomal subunit protein uL14 (RPL23), found in Canis lupus familiaris (Dog).